The following is a 94-amino-acid chain: Integration host factor subunit beta (94 aa).

Belongs to the bacterial histone-like protein family. Heterodimer of an alpha and a beta chain.

This protein is one of the two subunits of integration host factor, a specific DNA-binding protein that functions in genetic recombination as well as in transcriptional and translational control. This chain is Integration host factor subunit beta, found in Yersinia pseudotuberculosis serotype O:1b (strain IP 31758).